Consider the following 186-residue polypeptide: Translation initiation factor IF-3 (186 aa).

It belongs to the IF-3 family. Monomer.

Its subcellular location is the cytoplasm. Its function is as follows. IF-3 binds to the 30S ribosomal subunit and shifts the equilibrium between 70S ribosomes and their 50S and 30S subunits in favor of the free subunits, thus enhancing the availability of 30S subunits on which protein synthesis initiation begins. The sequence is that of Translation initiation factor IF-3 from Chlamydia caviae (strain ATCC VR-813 / DSM 19441 / 03DC25 / GPIC) (Chlamydophila caviae).